Reading from the N-terminus, the 212-residue chain is MLDKQTMVTAHNALPGRTTAMSIDDTHFVNGSSLTAAPQSGQQQILIGMGCFWGAERLFWQLDGVISTSVGYSGGFTPNPTYEEVCSGKTGHTEVVRVIFDPERLPLTELLRAFWERHDPTQGMRQGNDRGTQYRSAIYTFSEDQREIAEASKAAYQALLTAQHRPSITTEILPAGAYYFAETYHQQYLAKNPNGYCGLGGTGVCFPPHSTL.

Residue C51 is part of the active site.

This sequence belongs to the MsrA Met sulfoxide reductase family.

The enzyme catalyses L-methionyl-[protein] + [thioredoxin]-disulfide + H2O = L-methionyl-(S)-S-oxide-[protein] + [thioredoxin]-dithiol. It catalyses the reaction [thioredoxin]-disulfide + L-methionine + H2O = L-methionine (S)-S-oxide + [thioredoxin]-dithiol. Has an important function as a repair enzyme for proteins that have been inactivated by oxidation. Catalyzes the reversible oxidation-reduction of methionine sulfoxide in proteins to methionine. The sequence is that of Peptide methionine sulfoxide reductase MsrA from Vibrio cholerae serotype O1 (strain ATCC 39541 / Classical Ogawa 395 / O395).